Reading from the N-terminus, the 150-residue chain is Globin-3 (150 aa).

In terms of domain architecture, Globin spans 11 to 150; it reads PLSAAEKTKI…MICILLRSAY (140 aa). Positions 74 and 106 each coordinate heme b.

It belongs to the globin family. Monomer.

The polypeptide is Globin-3 (Petromyzon marinus (Sea lamprey)).